We begin with the raw amino-acid sequence, 407 residues long: MELLEEDLTCPICCSLFDDPRVLPCSHNFCKKCLEGILEGNVRNSLWRSSPFKCPTCRKETSATGVNSLQVNYSLKGIVEKYNKIKVSPKMPVCKGHLGQPLNIFCLTDMQLICGICATRGEHTKHVFCSIEDAYAQERDAFESLFQSFETWRRGDALSRLDTLETSKRKSLQLLTKDSDKVKEFFEKLQYTLDQKKNEILSDFETMKLAVMQAYDPEINKLNTILQEQRMAFNIAEAFKDVSEPIIFLQQMQEFREKIKVIKETPLPPSNLPSSPLMKNFDTSQWEDIKLVDVDKLSLPQDTGTFISKIPWRLYPLFVVVILLGLLIFFSPTMFLEWSLFDEIATWKDNLSNFSSYLTRSADFVEQSVFYWEQLTDGLFIFSERLKSFTLVVLNNVAEFVCKYKLL.

The RING-type zinc-finger motif lies at 10 to 58 (CPICCSLFDDPRVLPCSHNFCKKCLEGILEGNVRNSLWRSSPFKCPTCR). Residues 89-131 (PKMPVCKGHLGQPLNIFCLTDMQLICGICATRGEHTKHVFCSI) form a B box-type zinc finger. Cysteine 94, histidine 97, cysteine 117, and histidine 123 together coordinate Zn(2+). Residues 172 to 200 (LQLLTKDSDKVKEFFEKLQYTLDQKKNEI) are a coiled coil. A helical transmembrane segment spans residues 316–336 (PLFVVVILLGLLIFFSPTMFL).

Interacts (via C-terminal domain) with VCP. Interacts with AKT1; the interaction ubiquitinates AKT1 and leads to its proteasomal degradation. Interacts with MDM2; the interaction ubiquitinates AKT1 and leads to its proteasomal degradation. Interacts with p62/SQSTM1. Interacts with TRAF6. Interacts with IKBKG/NEMO. In terms of processing, auto-ubiquitinated; requires the RING-type zinc finger. Auto-polyubiquitination leads to proteasomal degradation.

It is found in the endoplasmic reticulum membrane. It carries out the reaction S-ubiquitinyl-[E2 ubiquitin-conjugating enzyme]-L-cysteine + [acceptor protein]-L-lysine = [E2 ubiquitin-conjugating enzyme]-L-cysteine + N(6)-ubiquitinyl-[acceptor protein]-L-lysine.. The protein operates within protein modification; protein ubiquitination. Its function is as follows. Endoplasmic reticulum (ER) membrane anchored E3 ligase involved in the retrotranslocation and turnover of membrane and secretory proteins from the ER through a set of processes named ER-associated degradation (ERAD). This process acts on misfolded proteins as well as in the regulated degradation of correctly folded proteins. Enhances ionizing radiation-induced p53/TP53 stability and apoptosis via ubiquitinating MDM2 and AKT1 and decreasing AKT1 kinase activity through MDM2 and AKT1 proteasomal degradation. Regulates ER stress-induced autophagy, and may act as a tumor suppressor. Also plays a role in innate immune response by stimulating NF-kappa-B activity in the TLR2 signaling pathway. Ubiquitinates TRAF6 via the 'Lys-29'-linked polyubiquitination chain resulting in NF-kappa-B activation. Participates as well in T-cell receptor-mediated NF-kappa-B activation. In the presence of TNF, modulates the IKK complex by regulating IKBKG/NEMO ubiquitination leading to the repression of NF-kappa-B. This Bos taurus (Bovine) protein is E3 ubiquitin-protein ligase TRIM13 (TRIM13).